A 430-amino-acid polypeptide reads, in one-letter code: Adenylosuccinate synthetase (430 aa).

GTP contacts are provided by residues 12 to 18 (GDEGKGK) and 40 to 42 (GHT). Catalysis depends on Asp13, which acts as the Proton acceptor. 2 residues coordinate Mg(2+): Asp13 and Gly40. Residues 13 to 16 (DEGK), 38 to 41 (NAGH), Thr128, Arg142, Gln223, Thr238, and Arg302 contribute to the IMP site. The Proton donor role is filled by His41. Residue 298-304 (TTTGRPR) coordinates substrate. GTP is bound by residues Arg304, 330-332 (SID), and 412-414 (SVG).

This sequence belongs to the adenylosuccinate synthetase family. Homodimer. Mg(2+) serves as cofactor.

The protein resides in the cytoplasm. It carries out the reaction IMP + L-aspartate + GTP = N(6)-(1,2-dicarboxyethyl)-AMP + GDP + phosphate + 2 H(+). Its pathway is purine metabolism; AMP biosynthesis via de novo pathway; AMP from IMP: step 1/2. Functionally, plays an important role in the de novo pathway of purine nucleotide biosynthesis. Catalyzes the first committed step in the biosynthesis of AMP from IMP. The sequence is that of Adenylosuccinate synthetase from Streptococcus agalactiae serotype III (strain NEM316).